The chain runs to 115 residues: Large ribosomal subunit protein bL20c (115 aa).

Belongs to the bacterial ribosomal protein bL20 family.

The protein localises to the plastid. The protein resides in the chloroplast. In terms of biological role, binds directly to 23S ribosomal RNA and is necessary for the in vitro assembly process of the 50S ribosomal subunit. It is not involved in the protein synthesizing functions of that subunit. This is Large ribosomal subunit protein bL20c from Physcomitrium patens (Spreading-leaved earth moss).